The sequence spans 463 residues: Fumarate hydratase class II (463 aa).

Substrate-binding positions include 98 to 100, 129 to 132, 139 to 141, and threonine 187; these read SGT, HPND, and SSN. The active-site Proton donor/acceptor is the histidine 188. Serine 318 is an active-site residue. Substrate-binding positions include serine 319 and 324-326; that span reads KVN.

It belongs to the class-II fumarase/aspartase family. Fumarase subfamily. In terms of assembly, homotetramer.

The protein localises to the cytoplasm. The catalysed reaction is (S)-malate = fumarate + H2O. Its pathway is carbohydrate metabolism; tricarboxylic acid cycle; (S)-malate from fumarate: step 1/1. In terms of biological role, involved in the TCA cycle. Catalyzes the stereospecific interconversion of fumarate to L-malate. The sequence is that of Fumarate hydratase class II from Brucella melitensis biotype 1 (strain ATCC 23456 / CCUG 17765 / NCTC 10094 / 16M).